Here is a 1241-residue protein sequence, read N- to C-terminus: Interphotoreceptor matrix proteoglycan 2 (1241 aa).

A signal peptide spans 1 to 28; the sequence is MIMFLPLGRISLGILILFLTGGNLVSVS. Topologically, residues 29-1104 are extracellular; that stretch reads EEIQDRMHAV…CEEFVSEPFV (1076 aa). The O-linked (GalNAc...) threonine glycan is linked to threonine 193. The segment at 206 to 234 is disordered; the sequence is AASERSAASPQESISNEIENVTEQPTPPA. Polar residues predominate over residues 211 to 229; the sequence is SAASPQESISNEIENVTEQ. The N-linked (GlcNAc...) asparagine glycan is linked to asparagine 225. Threonine 231 is a glycosylation site (O-linked (GalNAc...) threonine). Residues 235–349 enclose the SEA 1 domain; the sequence is AEQIAEFSIQ…KPTAVYTISN (115 aa). The hyaluronan-binding motif involved in chondroitin sulfate A-binding stretch occupies residues 255–263; that stretch reads RDPSSALYR. N-linked (GlcNAc...) asparagine glycans are attached at residues asparagine 297, asparagine 316, and asparagine 366. Residues threonine 429, threonine 430, and threonine 431 are each glycosylated (O-linked (GalNAc...) threonine). The span at 431–443 shows a compositional bias: low complexity; sequence TISPFGFSSGPPS. Disordered regions lie at residues 431 to 456 and 500 to 520; these read TISP…STLG and VAPE…TEES. The O-linked (GalNAc...) threonine glycan is linked to threonine 817. Residues asparagine 841, asparagine 945, and asparagine 959 are each glycosylated (N-linked (GlcNAc...) asparagine). Residues 900 to 1013 form the SEA 2 domain; that stretch reads GALVVFFSLR…YSLDVESGDD (114 aa). EGF-like domains follow at residues 1013-1054 and 1055-1096; these read DANP…LPCQ and SVCD…QHCE. 6 disulfide bridges follow: cysteine 1017–cysteine 1028, cysteine 1022–cysteine 1039, cysteine 1041–cysteine 1053, cysteine 1057–cysteine 1070, cysteine 1064–cysteine 1080, and cysteine 1082–cysteine 1095. The segment at 1083 to 1091 is hyaluronan-binding motif involved in chondroitin sulfate C-binding; the sequence is RVGSNWWYR. The helical transmembrane segment at 1105 to 1125 threads the bilayer; sequence IGITIASVVSLLLVASAVVFF. Topologically, residues 1126-1241 are cytoplasmic; sequence LAKMLQAQNV…FVREHEMEEL (116 aa). The segment at 1128 to 1136 is hyaluronan-binding motif involved in chondroitin sulfate A- and C-binding; it reads KMLQAQNVR. Positions 1139–1145 are hyaluronan-binding motif involved in chondroitin sulfate C-binding; the sequence is RQRPTNR. Residues 1210-1218 form a hyaluronan-binding motif involved in chondroitin sulfate A- and C-binding motif region; sequence KEEIQERMR.

In terms of tissue distribution, expressed in the pineal gland and the outer layer of the retina.

It is found in the photoreceptor outer segment membrane. Its subcellular location is the photoreceptor inner segment membrane. It localises to the secreted. The protein localises to the extracellular space. The protein resides in the extracellular matrix. It is found in the interphotoreceptor matrix. Functionally, chondroitin sulfate- and hyaluronan-binding proteoglycan involved in the organization of interphotoreceptor matrix; may participate in the maturation and maintenance of the light-sensitive photoreceptor outer segment. Binds heparin. This Rattus norvegicus (Rat) protein is Interphotoreceptor matrix proteoglycan 2 (Impg2).